We begin with the raw amino-acid sequence, 179 residues long: ATP synthase subunit delta (179 aa).

It belongs to the ATPase delta chain family. As to quaternary structure, F-type ATPases have 2 components, F(1) - the catalytic core - and F(0) - the membrane proton channel. F(1) has five subunits: alpha(3), beta(3), gamma(1), delta(1), epsilon(1). F(0) has three main subunits: a(1), b(2) and c(10-14). The alpha and beta chains form an alternating ring which encloses part of the gamma chain. F(1) is attached to F(0) by a central stalk formed by the gamma and epsilon chains, while a peripheral stalk is formed by the delta and b chains.

It is found in the cell inner membrane. Functionally, f(1)F(0) ATP synthase produces ATP from ADP in the presence of a proton or sodium gradient. F-type ATPases consist of two structural domains, F(1) containing the extramembraneous catalytic core and F(0) containing the membrane proton channel, linked together by a central stalk and a peripheral stalk. During catalysis, ATP synthesis in the catalytic domain of F(1) is coupled via a rotary mechanism of the central stalk subunits to proton translocation. This protein is part of the stalk that links CF(0) to CF(1). It either transmits conformational changes from CF(0) to CF(1) or is implicated in proton conduction. In Delftia acidovorans (strain DSM 14801 / SPH-1), this protein is ATP synthase subunit delta.